Consider the following 156-residue polypeptide: 2-C-methyl-D-erythritol 2,4-cyclodiphosphate synthase (156 aa).

Asp10 and His12 together coordinate a divalent metal cation. 4-CDP-2-C-methyl-D-erythritol 2-phosphate-binding positions include 10-12 (DSH) and 36-37 (HS). His44 contributes to the a divalent metal cation binding site. Residues 58–60 (DIG) and 63–67 (FKDTD) each bind 4-CDP-2-C-methyl-D-erythritol 2-phosphate.

The protein belongs to the IspF family. In terms of assembly, homotrimer. A divalent metal cation serves as cofactor.

The enzyme catalyses 4-CDP-2-C-methyl-D-erythritol 2-phosphate = 2-C-methyl-D-erythritol 2,4-cyclic diphosphate + CMP. Its pathway is isoprenoid biosynthesis; isopentenyl diphosphate biosynthesis via DXP pathway; isopentenyl diphosphate from 1-deoxy-D-xylulose 5-phosphate: step 4/6. Functionally, involved in the biosynthesis of isopentenyl diphosphate (IPP) and dimethylallyl diphosphate (DMAPP), two major building blocks of isoprenoid compounds. Catalyzes the conversion of 4-diphosphocytidyl-2-C-methyl-D-erythritol 2-phosphate (CDP-ME2P) to 2-C-methyl-D-erythritol 2,4-cyclodiphosphate (ME-CPP) with a corresponding release of cytidine 5-monophosphate (CMP). This chain is 2-C-methyl-D-erythritol 2,4-cyclodiphosphate synthase, found in Aquifex aeolicus (strain VF5).